Consider the following 121-residue polypeptide: Large ribosomal subunit protein uL24 (121 aa).

Positions 1–30 are disordered; it reads MVRIVSKQPRKQRKARYNAPNHTRGRFLSA.

Belongs to the universal ribosomal protein uL24 family. Part of the 50S ribosomal subunit.

In terms of biological role, one of two assembly initiator proteins, it binds directly to the 5'-end of the 23S rRNA, where it nucleates assembly of the 50S subunit. Its function is as follows. Located at the polypeptide exit tunnel on the outside of the subunit. The sequence is that of Large ribosomal subunit protein uL24 from Methanoculleus marisnigri (strain ATCC 35101 / DSM 1498 / JR1).